The following is an 821-amino-acid chain: BDNF/NT-3 growth factors receptor (821 aa).

Residues M1 to A31 form the signal peptide. 2 disulfide bridges follow: C32/C38 and C36/C45. An LRRNT domain is found at C32 to N61. At C32–H429 the chain is on the extracellular side. 3 N-linked (GlcNAc...) asparagine glycosylation sites follow: N67, N95, and N121. LRR repeat units lie at residues G92 to K113 and N116 to H137. An LRRCT domain is found at N148–L196. Cystine bridges form between C152–C176 and C154–C194. N-linked (GlcNAc...) asparagine glycans are attached at residues N178, N205, N241, N254, N280, N325, N338, N350, and N411. 2 Ig-like C2-type domains span residues P197–T282 and W301–N365. Cysteines 218 and 266 form a disulfide. An intrachain disulfide couples C302 to C345. The chain crosses the membrane as a helical span at residues L430 to L453. The interaction with MAPK8IP3/JIP3 stretch occupies residues K454–G465. Over K454–G821 the chain is Cytoplasmic. The segment at D474 to P497 is disordered. The span at S484 to E494 shows a compositional bias: polar residues. Y515 is modified (phosphotyrosine). Residues I537–L806 enclose the Protein kinase domain. ATP-binding positions include L543–V551 and K571. Catalysis depends on D675, which acts as the Proton acceptor. Phosphotyrosine; by autocatalysis is present on residues Y701, Y705, Y706, and Y816.

It belongs to the protein kinase superfamily. Tyr protein kinase family. Insulin receptor subfamily. In terms of assembly, exists in a dynamic equilibrium between monomeric (low affinity) and dimeric (high affinity) structures. Interacts (phosphorylated upon activation by BDNF) with SHC1; mediates SHC1 phosphorylation and activation. Interacts (phosphorylated upon activation by BDNF) with PLCG1 and/or PLCG2; mediates PLCG1 phosphorylation and activation. Interacts with SH2B1 and SH2B2. Interacts with NGFR; may regulate the ligand specificity of the receptor. Interacts with SORCS2; this interaction is important for normal targeting to post-synaptic densities in response to high-frequency stimulation. Interacts (phosphorylated upon ligand-binding) with SH2D1A; regulates NTRK2. Interacts with SQSTM1 and KIDINS220. Interacts (phosphorylated upon ligand-binding) with FRS2; activates the MAPK signaling pathway. Interacts with APPL1. Interacts with MAPK8IP3/JIP3 and KLC1; interaction with KLC1 is mediated by MAPK8IP3/JIP3. Interacts with SORL1; this interaction facilitates NTRK2 trafficking between synaptic plasma membranes, postsynaptic densities and cell soma, hence positively regulates BDNF signaling. Interacts with SLITRK2. Post-translationally, phosphorylated. Undergoes ligand-mediated autophosphorylation that is required for interaction with SHC1 and PLCG1 and other downstream effectors. Some isoforms are not phosphorylated. In terms of processing, ubiquitinated. Undergoes polyubiquitination upon activation; regulated by NGFR. Ubiquitination regulates the internalization of the receptor. In terms of tissue distribution, expressed in the brain, in neurons (at protein level). Detected in hippocampus (at protein level). Widely expressed in the central and peripheral nervous system. The different forms are differentially expressed in various cell types. Isoform GP95-TRKB is specifically expressed in glial cells.

The protein localises to the cell membrane. Its subcellular location is the endosome membrane. The protein resides in the early endosome membrane. It localises to the cell projection. It is found in the axon. The protein localises to the dendrite. Its subcellular location is the cytoplasm. The protein resides in the perinuclear region. It localises to the postsynaptic density. The catalysed reaction is L-tyrosyl-[protein] + ATP = O-phospho-L-tyrosyl-[protein] + ADP + H(+). Its activity is regulated as follows. The formation of active receptors dimers able to fully transduce the ligand-mediated signal, may be negatively regulated by the formation of inactive heterodimers with the non-catalytic isoforms. The neuronal activity and the influx of calcium positively regulate the kinase activity and the internalization of the receptor which are both important for active signaling. Regulated by NGFR that may control the internalization of the receptor. NGFR may also stimulate the activation by BDNF compared to NTF3 and NTF4. SH2D1A inhibits the autophosphorylation of the receptor, and alters the recruitment and activation of downstream effectors and signaling cascades. Its function is as follows. Receptor tyrosine kinase involved in the development and the maturation of the central and the peripheral nervous systems through regulation of neuron survival, proliferation, migration, differentiation, and synapse formation and plasticity. Receptor for BDNF/brain-derived neurotrophic factor and NTF4/neurotrophin-4. Alternatively can also bind NTF3/neurotrophin-3 which is less efficient in activating the receptor but regulates neuron survival through NTRK2. Upon ligand-binding, undergoes homodimerization, autophosphorylation and activation. Recruits, phosphorylates and/or activates several downstream effectors including SHC1, FRS2, SH2B1, SH2B2 and PLCG1 that regulate distinct overlapping signaling cascades. Through SHC1, FRS2, SH2B1, SH2B2 activates the GRB2-Ras-MAPK cascade that regulates for instance neuronal differentiation including neurite outgrowth. Through the same effectors controls the Ras-PI3 kinase-AKT1 signaling cascade that mainly regulates growth and survival. Through PLCG1 and the downstream protein kinase C-regulated pathways controls synaptic plasticity. Thereby, plays a role in learning and memory by regulating both short term synaptic function and long-term potentiation. PLCG1 also leads to NF-Kappa-B activation and the transcription of genes involved in cell survival. Hence, it is able to suppress anoikis, the apoptosis resulting from loss of cell-matrix interactions. Isoform GP95-TRKB may also play a role in neutrophin-dependent calcium signaling in glial cells and mediate communication between neurons and glia. This chain is BDNF/NT-3 growth factors receptor, found in Mus musculus (Mouse).